Consider the following 294-residue polypeptide: Shikimate dehydrogenase (NADP(+)) (294 aa).

Residues 22–24 (SLS) and Ser-69 contribute to the shikimate site. Residue Lys-73 is the Proton acceptor of the active site. Asn-94 and Asp-111 together coordinate shikimate. NADP(+) is bound by residues 135-139 (GAGGA) and Leu-236. Position 238 (Tyr-238) interacts with shikimate. Position 260 (Gly-260) interacts with NADP(+).

It belongs to the shikimate dehydrogenase family. As to quaternary structure, homodimer.

It catalyses the reaction shikimate + NADP(+) = 3-dehydroshikimate + NADPH + H(+). It participates in metabolic intermediate biosynthesis; chorismate biosynthesis; chorismate from D-erythrose 4-phosphate and phosphoenolpyruvate: step 4/7. Involved in the biosynthesis of the chorismate, which leads to the biosynthesis of aromatic amino acids. Catalyzes the reversible NADPH linked reduction of 3-dehydroshikimate (DHSA) to yield shikimate (SA). This Streptococcus equi subsp. zooepidemicus (strain MGCS10565) protein is Shikimate dehydrogenase (NADP(+)).